We begin with the raw amino-acid sequence, 268 residues long: L-proline trans-4-hydroxylase (268 aa).

Positions 113, 115, and 218 each coordinate Fe cation.

It belongs to the PhyH family. As to quaternary structure, monomer. It depends on Fe(2+) as a cofactor.

It carries out the reaction L-proline + 2-oxoglutarate + O2 = trans-4-hydroxy-L-proline + succinate + CO2. The protein operates within antibiotic biosynthesis. Competitively inhibited by pyridine-2,4-dicarboxylate. Inhibited by diethyl pyrocarbonate (DEPC), 3,4-dihydroxybenzoate, pyridine-2,5-dicarboxylate, alpha,alpha'-dipyridyl, and some metal ions such as Co(2+) and Zn(2+). In terms of biological role, involved in the biosynthesis of the peptidolactone antibiotic etamycin (viridogrisein). Catalyzes the hydroxylation of free L-proline at the C-4 position to yield trans-4-hydroxy-L-proline. In Streptomyces griseoviridis, this protein is L-proline trans-4-hydroxylase.